The following is a 582-amino-acid chain: Methionine--tRNA ligase (582 aa).

A 'HIGH' region motif is present at residues P24–N34. Zn(2+) is bound by residues C156, C159, C169, and C172. The 'KMSKS' region motif lies at K346–S350. K349 provides a ligand contact to ATP.

The protein belongs to the class-I aminoacyl-tRNA synthetase family. MetG type 1 subfamily. Requires Zn(2+) as cofactor.

The protein resides in the cytoplasm. It catalyses the reaction tRNA(Met) + L-methionine + ATP = L-methionyl-tRNA(Met) + AMP + diphosphate. Its function is as follows. Is required not only for elongation of protein synthesis but also for the initiation of all mRNA translation through initiator tRNA(fMet) aminoacylation. In Caldivirga maquilingensis (strain ATCC 700844 / DSM 13496 / JCM 10307 / IC-167), this protein is Methionine--tRNA ligase.